The sequence spans 274 residues: Transcription factor Ovo-like 2 (274 aa).

Over residues 1 to 11 (MPKVFLVKRRS) the composition is skewed to basic residues. The tract at residues 1-88 (MPKVFLVKRR…ETPELHDAQG (88 aa)) is disordered. The segment covering 18 to 29 (SWDELPDDKRAD) has biased composition (basic and acidic residues). The segment covering 50–74 (DGGSSSGCSSSAGEPGGAESSSSPR) has biased composition (low complexity). 4 C2H2-type zinc fingers span residues 118-140 (HNCD…LKCH), 146-168 (HLCT…VRTH), 174-197 (YKCE…KKIH), and 213-236 (YVCE…NSDH). The residue at position 268 (S268) is a Phosphoserine.

This sequence belongs to the krueppel C2H2-type zinc-finger protein family. Interacts (via zinc-finger domains) with CEBPA (via bZIP domain); the interaction inhibits the transcription factor activity of CEBPA and is required to repress adipogenesis. In terms of tissue distribution, expressed highly in testis, specifically in spermatocytes. Expressed also in skin and at lower levels in the ovary. Expressed in adipose tissues. Expression is lower than in testis and a relatively higher expression level is detected in the stromal vascular fraction (SVF) than in fat cells themselves.

It is found in the nucleus. In terms of biological role, zinc-finger transcription repressor factor. Plays a critical role in maintaining the identity of epithelial lineages by suppressing epithelial-to mesenchymal transition (EMT) mainly through the repression of ZEB1, an EMT inducer. Positively regulates neuronal differentiation. Suppresses cell cycling and terminal differentiation of keratinocytes by directly repressing MYC and NOTCH1. Important for the correct development of primordial germ cells in embryos. Plays dual functions in thermogenesis and adipogenesis to maintain energy balance. Essential for brown/beige adipose tissue-mediated thermogenesis, is necessary for the development of brown adipocytes. In white adipose tissues, limits adipogenesis by blocking CEBPA binding to its transcriptional targets and inhibiting its transcription factor activity. The sequence is that of Transcription factor Ovo-like 2 from Mus musculus (Mouse).